The sequence spans 334 residues: DNA-directed RNA polymerase subunit alpha (334 aa).

Positions 1–234 (MQRSVHELLT…QQLAVFVDFD (234 aa)) are alpha N-terminal domain (alpha-NTD). Residues 248–334 (IDPILLRPVD…LRGDDRVLGG (87 aa)) form an alpha C-terminal domain (alpha-CTD) region.

It belongs to the RNA polymerase alpha chain family. As to quaternary structure, homodimer. The RNAP catalytic core consists of 2 alpha, 1 beta, 1 beta' and 1 omega subunit. When a sigma factor is associated with the core the holoenzyme is formed, which can initiate transcription.

The catalysed reaction is RNA(n) + a ribonucleoside 5'-triphosphate = RNA(n+1) + diphosphate. DNA-dependent RNA polymerase catalyzes the transcription of DNA into RNA using the four ribonucleoside triphosphates as substrates. The chain is DNA-directed RNA polymerase subunit alpha from Marinobacter nauticus (strain ATCC 700491 / DSM 11845 / VT8) (Marinobacter aquaeolei).